Consider the following 314-residue polypeptide: E3 ubiquitin-protein ligase CHIP (314 aa).

Over residues 1 to 11 (MKGKEEREREG) the composition is skewed to basic and acidic residues. The segment at 1-47 (MKGKEEREREGGGGAVGPGAAGPGAGGGSPEKSHSAQEHKEQGNRLF) is disordered. A compositionally biased stretch (gly residues) spans 12–29 (GGGAVGPGAAGPGAGGGS). The segment covering 31–43 (EKSHSAQEHKEQG) has biased composition (basic and acidic residues). TPR repeat units lie at residues 36-69 (AQEHKEQGNRLFGGRKYPEAAAAYGRAINRNPLV), 70-103 (AVYYTNRALCYLKMQQHDKALADCKRALELDGQS), and 105-137 (KAHFFLGQCQMEMENYDEAIANLQRAYNLAKEQ). Residues 237 to 311 (DIPDYLCGKI…DAFISENGWV (75 aa)) enclose the U-box domain.

Homodimer.

Its subcellular location is the cytoplasm. The protein localises to the nucleus. It localises to the mitochondrion. The catalysed reaction is S-ubiquitinyl-[E2 ubiquitin-conjugating enzyme]-L-cysteine + [acceptor protein]-L-lysine = [E2 ubiquitin-conjugating enzyme]-L-cysteine + N(6)-ubiquitinyl-[acceptor protein]-L-lysine.. In terms of biological role, E3 ubiquitin-protein ligase which targets misfolded chaperone substrates towards proteasomal degradation. Collaborates with ATXN3 in the degradation of misfolded chaperone substrates: ATXN3 restricting the length of ubiquitin chain attached to STUB1/CHIP substrates and preventing further chain extension. The chain is E3 ubiquitin-protein ligase CHIP from Gallus gallus (Chicken).